Reading from the N-terminus, the 554-residue chain is Calcium-dependent protein kinase 3 (554 aa).

The segment at 30–55 (KKKSSNKSIKSQHKFEGSKIANKNNE) is disordered. In terms of domain architecture, Protein kinase spans 110–365 (NLSEEPLGKG…ASEALKHPWF (256 aa)). Residues 116-124 (LGKGTYGCV) and lysine 139 each bind ATP. Aspartate 230 functions as the Proton acceptor in the catalytic mechanism. The short motif at 385-393 (NFKNYALLL) is the J domain autoinhibitory motif element. Residues 385-420 (NFKNYALLLKLQKLAMTIIAQQSNDYDLQQLKTVFL) form a j domain region. Positions 394–403 (KLQKLAMTII) match the J domain EF-hand interaction motif motif. EF-hand domains lie at 410–445 (YDLQQLKTVFLYLDEDGKGNITKNQLKKGLENSGLK), 448–479 (QNFDVLLDQIDSDGSGRIDYTEFLAAALDRKH), 480–515 (LSKKLIYCAFRVFDVDNDGEITTAELAHILYNGNKK), and 521–554 (KDVNQVKKMIQEVDKNNDGKIDFYEFCEMMKLKY). Aspartate 458, aspartate 460, serine 462, arginine 464, glutamate 469, aspartate 493, aspartate 495, aspartate 497, glutamate 499, glutamate 504, aspartate 534, asparagine 536, aspartate 538, lysine 540, and glutamate 545 together coordinate Ca(2+).

It belongs to the protein kinase superfamily. Ser/Thr protein kinase family. CDPK subfamily. Requires Mg(2+) as cofactor.

Its subcellular location is the cytoplasm. It carries out the reaction L-seryl-[protein] + ATP = O-phospho-L-seryl-[protein] + ADP + H(+). The enzyme catalyses L-threonyl-[protein] + ATP = O-phospho-L-threonyl-[protein] + ADP + H(+). With respect to regulation, activated by calcium. Upon calcium binding to the EF-hand domain 2, the C-terminus of the junction domain (J domain) undergoes a conformational change which results in the dissociation of the pseudo-substrate inhibitory motif from the catalytic domain. This, in turn, may facilitate the autophosphorylation of the activation loop at Thr-271, which leads to the kinase activation. Functionally, calcium-dependent protein kinase which acts as a sensor and effector of intracellular Ca(2+) levels probably in part downstream of cGMP-activated PKG kinase. In the mosquito midgut, regulates the gliding motility of the ookinete which is essential for the ookinete to invade the midgut epithelium. However, another study showed that while required for ookinete invasion of the midgut epithelium, is not required for ookinete gliding motility. The chain is Calcium-dependent protein kinase 3 from Plasmodium berghei (strain Anka).